Here is a 398-residue protein sequence, read N- to C-terminus: Tryptophan synthase beta chain (398 aa).

Lys88 is subject to N6-(pyridoxal phosphate)lysine.

It belongs to the TrpB family. Tetramer of two alpha and two beta chains. The cofactor is pyridoxal 5'-phosphate.

It carries out the reaction (1S,2R)-1-C-(indol-3-yl)glycerol 3-phosphate + L-serine = D-glyceraldehyde 3-phosphate + L-tryptophan + H2O. It participates in amino-acid biosynthesis; L-tryptophan biosynthesis; L-tryptophan from chorismate: step 5/5. The beta subunit is responsible for the synthesis of L-tryptophan from indole and L-serine. This is Tryptophan synthase beta chain from Haemophilus influenzae (strain PittGG).